The following is a 334-amino-acid chain: Ferredoxin--NADP reductase (334 aa).

Asp-33, Gln-41, Tyr-46, Ala-86, Phe-120, Asp-286, and Thr-327 together coordinate FAD.

Belongs to the ferredoxin--NADP reductase type 2 family. Homodimer. The cofactor is FAD.

It catalyses the reaction 2 reduced [2Fe-2S]-[ferredoxin] + NADP(+) + H(+) = 2 oxidized [2Fe-2S]-[ferredoxin] + NADPH. The sequence is that of Ferredoxin--NADP reductase from Rickettsia massiliae (strain Mtu5).